The sequence spans 1556 residues: Bromodomain adjacent to zinc finger domain protein 1A (1556 aa).

Residues 1–128 form a required for interaction with the CHRAC1-POLE3 heterodimer. Required for interaction with the CHRAC1-POLE3 heterodimer region; that stretch reads MPLLHRKPFV…EETVEVIRNN (128 aa). The interval 1–133 is required for interaction with NCOR1; sequence MPLLHRKPFV…VIRNNGARLQ (133 aa). Residues 22–128 enclose the WAC domain; the sequence is EEVFYCKVTN…EETVEVIRNN (107 aa). Ser-270 is subject to Phosphoserine. Residues 306-397 adopt a coiled-coil conformation; sequence KERDKLLKQE…YVEYLKQWSK (92 aa). Positions 422–487 constitute a DDT domain; sequence PEIFGDALMV…LTAIFQAIAE (66 aa). Residues 634 to 709 adopt a coiled-coil conformation; sequence IEDYVDILRQ…DISIGEEERE (76 aa). Basic and acidic residues predominate over residues 662–695; sequence EAAARIRKRKEEKLKEQEQKMKEKQEKLKEDEQR. 3 disordered regions span residues 662–754, 841–877, and 941–966; these read EAAA…NGFK, PSSFQNNVQSQDPQVSTKTGEPLMSESTSNIDQGPRD, and FHFSDKPQPDSKPTYSRGRSSNAYDP. The interval 667 to 933 is required for interaction with SMARCA5 and formation of the CHRAC ISWI chromatin remodeling complex; sequence IRKRKEEKLK…QEKSRICAQL (267 aa). Ser-702 carries the post-translational modification Phosphoserine. A compositionally biased stretch (acidic residues) spans 703–713; it reads IGEEEREDFDT. The segment covering 715–726 has biased composition (basic and acidic residues); that stretch reads IESKDTEQKELD. The segment covering 727–736 has biased composition (acidic residues); it reads QDMVTEDEDD. The residue at position 731 (Thr-731) is a Phosphothreonine. Polar residues-rich tracts occupy residues 842–872 and 951–965; these read SSFQNNVQSQDPQVSTKTGEPLMSESTSNID and SKPTYSRGRSSNAYD. Residue Lys-952 forms a Glycyl lysine isopeptide (Lys-Gly) (interchain with G-Cter in SUMO2) linkage. 2 positions are modified to phosphoserine: Ser-960 and Ser-961. The PHD-type zinc-finger motif lies at 1148-1198; that stretch reads NARCKICRKKGDAENMVLCDGCDRGHHTYCVRPKLKTVPEGDWFCPECRPK. Disordered stretches follow at residues 1202 to 1376 and 1399 to 1431; these read RRLS…NFPN and LQESESKRRCRKRQSPEPSPVTLGRRSSGRQGG. Residues 1213–1258 are compositionally biased toward acidic residues; it reads ESDEDVEDSMGGEDDEVDGDEEEGQSEEEEYEVEQDEDDSQEEEEV. The segment covering 1262-1276 has biased composition (basic residues); the sequence is KRGRPQVRLPVKTRG. Residues 1277–1312 show a composition bias toward polar residues; it reads KLSSSFSSRGQQQEPGRYPSRSQQSTPKTTVSSKTG. A phosphoserine mark is found at Ser-1281, Ser-1320, Ser-1339, Ser-1353, Ser-1363, Ser-1371, Ser-1402, Ser-1413, and Ser-1417. Residues 1363–1374 are compositionally biased toward polar residues; the sequence is SANNTPENSPNF. The Bromo domain maps to 1430–1533; that stretch reads GGVHELSAFE…AFFHIQAQKL (104 aa). Thr-1547 carries the phosphothreonine modification.

Belongs to the WAL family. Component of the ACF-1 ISWI chromatin remodeling complex at least composed of SMARCA1 and BAZ1A, which regulates the spacing of histone octamers on the DNA template to facilitate access to DNA. Within the ACF-1 ISWI chromatin remodeling complex interacts with SMARCA1; the interaction is direct. Component of the ACF-5 ISWI chromatin remodeling complex (also called the ACF complex) at least composed of BAZ1A and SMARCA5/SNF2H, which regulates the spacing of histone octamers on the DNA template to facilitate access to DNA. Within the ACF-5 ISWI chromatin remodeling complex interacts with SMARCA5/SNF2H; the interaction is direct. Component of the CHRAC ISWI chromatin remodeling complex at least composed of SMARCA5/SNF2H, BAZ1A/ACF1, CHRAC1 and POLE3; the complex preferentially binds DNA through the CHRAC1-POLE3 heterodimer and possesses ATP-dependent nucleosome-remodeling activity. Within the complex interacts (via N-terminus) with POLE3-CHRAC1 heterodimer; the interaction is direct and is required for the complex to preferentially bind to DNA. Within the complex interacts with SMARCA5/SNF2H; the interaction is direct and promotes the interaction with the POLE3-CHRAC1 heterodimer. Interacts with NCOR1 (via its RD1 domain); the interaction corepresses a number of NCOR1-regulated genes. Highly expressed in testis and at low or undetectable levels in other tissues analyzed.

Its subcellular location is the nucleus. In terms of biological role, regulatory subunit of the ATP-dependent ACF-1 and ACF-5 ISWI chromatin remodeling complexes, which form ordered nucleosome arrays on chromatin and slide edge- and center-positioned histone octamers away from their original location on the DNA template to facilitate access to DNA during DNA-templated processes such as DNA replication, transcription, and repair. Both complexes regulate the spacing of nucleosomes along the chromatin and have the ability to slide mononucleosomes to the center of a DNA template in an ATP-dependent manner. The ACF-1 ISWI chromatin remodeling complex has a lower ATP hydrolysis rate than the ACF-5 ISWI chromatin remodeling complex. Has a role in sensing the length of DNA which flank nucleosomes, which modulates the nucleosome spacing activity of the ACF-5 ISWI chromatin remodeling complex. Involved in DNA replication and together with SMARCA5/SNF2H is required for replication of pericentric heterochromatin in S-phase. May have a role in nuclear receptor-mediated transcription repression. In Homo sapiens (Human), this protein is Bromodomain adjacent to zinc finger domain protein 1A (BAZ1A).